Reading from the N-terminus, the 428-residue chain is Enolase (428 aa).

(2R)-2-phosphoglycerate is bound at residue Gln173. Glu217 functions as the Proton donor in the catalytic mechanism. Residues Asp253, Glu294, and Asp320 each coordinate Mg(2+). (2R)-2-phosphoglycerate contacts are provided by Lys345, Arg374, Ser375, and Lys396. Lys345 acts as the Proton acceptor in catalysis.

It belongs to the enolase family. Mg(2+) serves as cofactor.

The protein localises to the cytoplasm. It localises to the secreted. Its subcellular location is the cell surface. The enzyme catalyses (2R)-2-phosphoglycerate = phosphoenolpyruvate + H2O. It participates in carbohydrate degradation; glycolysis; pyruvate from D-glyceraldehyde 3-phosphate: step 4/5. In terms of biological role, catalyzes the reversible conversion of 2-phosphoglycerate (2-PG) into phosphoenolpyruvate (PEP). It is essential for the degradation of carbohydrates via glycolysis. This is Enolase from Methanosarcina barkeri (strain Fusaro / DSM 804).